The sequence spans 169 residues: Ribosome maturation factor RimM (169 aa).

One can recognise a PRC barrel domain in the interval 96 to 166; sequence EDEFYFADLI…AVVVRPVEVE (71 aa).

It belongs to the RimM family. As to quaternary structure, binds ribosomal protein uS19.

Its subcellular location is the cytoplasm. In terms of biological role, an accessory protein needed during the final step in the assembly of 30S ribosomal subunit, possibly for assembly of the head region. Essential for efficient processing of 16S rRNA. May be needed both before and after RbfA during the maturation of 16S rRNA. It has affinity for free ribosomal 30S subunits but not for 70S ribosomes. The polypeptide is Ribosome maturation factor RimM (Acidiphilium cryptum (strain JF-5)).